Here is a 722-residue protein sequence, read N- to C-terminus: Biotin--protein ligase (722 aa).

The tract at residues 27 to 93 is disordered; it reads KELGKASDKQ…EPAADGDPGL (67 aa). Residues 46 to 55 show a composition bias toward low complexity; sequence ASPEAQPAQG. A Phosphoserine modification is found at S295. In terms of domain architecture, BPL/LPL catalytic spans 459 to 648; the sequence is TRLGKVILFA…VLEKLIDRFQ (190 aa).

The protein belongs to the biotin--protein ligase family. Monomer.

Its subcellular location is the cytoplasm. The protein resides in the mitochondrion. It catalyses the reaction apo-[methylmalonyl-CoA:pyruvate carboxytransferase] + biotin + ATP = holo-[methylmalonyl-CoA:pyruvate carboxytransferase] + AMP + diphosphate + H(+). It carries out the reaction apo-[propionyl-CoA:carbon-dioxide ligase (ADP-forming)] + biotin + ATP = holo-[propionyl-CoA:carbon-dioxide ligase (ADP-forming)] + AMP + diphosphate + H(+). The catalysed reaction is apo-[3-methylcrotonoyl-CoA:carbon-dioxide ligase (ADP-forming)] + biotin + ATP = holo-[3-methylcrotonoyl-CoA:carbon-dioxide ligase (ADP-forming)] + AMP + diphosphate + H(+). The enzyme catalyses biotin + L-lysyl-[protein] + ATP = N(6)-biotinyl-L-lysyl-[protein] + AMP + diphosphate + H(+). Biotin--protein ligase catalyzing the biotinylation of the 4 biotin-dependent carboxylases acetyl-CoA-carboxylase, pyruvate carboxylase, propionyl-CoA carboxylase, and methylcrotonyl-CoA carboxylase. The sequence is that of Biotin--protein ligase from Mus musculus (Mouse).